The following is a 211-amino-acid chain: Imidazole glycerol phosphate synthase subunit HisH (211 aa).

The 211-residue stretch at 1-211 (MIGIIDYGMG…ASIIEGKGSM (211 aa)) folds into the Glutamine amidotransferase type-1 domain. Catalysis depends on cysteine 79, which acts as the Nucleophile. Residues histidine 186 and glutamate 188 contribute to the active site.

As to quaternary structure, heterodimer of HisH and HisF.

The protein resides in the cytoplasm. It carries out the reaction 5-[(5-phospho-1-deoxy-D-ribulos-1-ylimino)methylamino]-1-(5-phospho-beta-D-ribosyl)imidazole-4-carboxamide + L-glutamine = D-erythro-1-(imidazol-4-yl)glycerol 3-phosphate + 5-amino-1-(5-phospho-beta-D-ribosyl)imidazole-4-carboxamide + L-glutamate + H(+). The enzyme catalyses L-glutamine + H2O = L-glutamate + NH4(+). It functions in the pathway amino-acid biosynthesis; L-histidine biosynthesis; L-histidine from 5-phospho-alpha-D-ribose 1-diphosphate: step 5/9. Functionally, IGPS catalyzes the conversion of PRFAR and glutamine to IGP, AICAR and glutamate. The HisH subunit catalyzes the hydrolysis of glutamine to glutamate and ammonia as part of the synthesis of IGP and AICAR. The resulting ammonia molecule is channeled to the active site of HisF. The protein is Imidazole glycerol phosphate synthase subunit HisH of Geobacillus sp. (strain WCH70).